The sequence spans 219 residues: Epididymal secretory glutathione peroxidase (219 aa).

The signal sequence occupies residues 1–21 (MTVQLGAFYLFPLFMAGFVQT). Cys71 is a catalytic residue.

The protein belongs to the glutathione peroxidase family. Homotetramer. Proximal caput epididymis.

Its subcellular location is the secreted. It carries out the reaction 2 glutathione + H2O2 = glutathione disulfide + 2 H2O. In terms of biological role, may constitute a glutathione peroxidase-like protective system against peroxide damage in sperm membrane lipids. Since the purified porcine enzyme has very little activity towards hydrogen peroxide or organic hydroperoxides the protective effect is not likely to be exerted by its enzymatic activity. Instead, may protect sperm from premature acrosome reaction in the epididymis by binding to lipid peroxides, which might otherwise interact with phospholipase A2 and induce the acrosome reaction. The sequence is that of Epididymal secretory glutathione peroxidase (GPX5) from Sus scrofa (Pig).